Here is a 72-residue protein sequence, read N- to C-terminus: Delta-actitoxin-Avd2b 3 (72 aa).

An N-terminal signal peptide occupies residues Met1–Ala21. Positions Asn22–Gly42 are excised as a propeptide. Cystine bridges form between Cys47–Cys62, Cys48–Cys56, and Cys50–Cys67.

Belongs to the sea anemone short toxin (type III) family.

The protein localises to the secreted. It is found in the nematocyst. Its function is as follows. Voltage-gated sodium channel (Nav) inhibitor. 1 uM completely inhibits insect voltage-gated sodium channel inactivation (DmNav1 from D.melanogaster). The chain is Delta-actitoxin-Avd2b 3 from Anemonia viridis (Snakelocks anemone).